The primary structure comprises 183 residues: Ribulose bisphosphate carboxylase small subunit, chloroplastic 4 (183 aa).

Residues 1-57 constitute a chloroplast transit peptide; sequence MASSLMSNAATTMAAATTTAQANMVAPFNGLKSISAFPVTRKNNDITSVASNGGRVQ.

It belongs to the RuBisCO small chain family. As to quaternary structure, heterohexadecamer of 8 large and 8 small subunits.

Its subcellular location is the plastid. The protein localises to the chloroplast. Its function is as follows. RuBisCO catalyzes two reactions: the carboxylation of D-ribulose 1,5-bisphosphate, the primary event in carbon dioxide fixation, as well as the oxidative fragmentation of the pentose substrate. Both reactions occur simultaneously and in competition at the same active site. Although the small subunit is not catalytic it is essential for maximal activity. The sequence is that of Ribulose bisphosphate carboxylase small subunit, chloroplastic 4 from Mesembryanthemum crystallinum (Common ice plant).